The primary structure comprises 134 residues: Small ribosomal subunit protein uS8 (134 aa).

This sequence belongs to the universal ribosomal protein uS8 family. Part of the 30S ribosomal subunit. Contacts proteins S5 and S12.

Its function is as follows. One of the primary rRNA binding proteins, it binds directly to 16S rRNA central domain where it helps coordinate assembly of the platform of the 30S subunit. This is Small ribosomal subunit protein uS8 from Thermosipho africanus (strain TCF52B).